We begin with the raw amino-acid sequence, 310 residues long: UDP-N-acetylenolpyruvoylglucosamine reductase (310 aa).

An FAD-binding PCMH-type domain is found at 34–213 (RAGGNAEVLF…LRRMNEITSS (180 aa)). The active site involves R178. S227 (proton donor) is an active-site residue. Residue E297 is part of the active site.

The protein belongs to the MurB family. The cofactor is FAD.

The protein localises to the cytoplasm. It carries out the reaction UDP-N-acetyl-alpha-D-muramate + NADP(+) = UDP-N-acetyl-3-O-(1-carboxyvinyl)-alpha-D-glucosamine + NADPH + H(+). Its pathway is cell wall biogenesis; peptidoglycan biosynthesis. Functionally, cell wall formation. This chain is UDP-N-acetylenolpyruvoylglucosamine reductase, found in Parvibaculum lavamentivorans (strain DS-1 / DSM 13023 / NCIMB 13966).